A 261-amino-acid polypeptide reads, in one-letter code: MLICNDKFNPKTLLEEIMALRPWRKGPFEISQIKIDSEWDSSIKWDLVKNATPLKDKVVADVGCNNGYYLFKMLEHGPKSLVGFDPGVLVKKQFEFLAPFFDKEKKIIYESLGVEDLHEKYSNAFDVIFCLGVLYHRKSPLEALKALYHALKIRGELVLDTLIIDSPLDIALCPKKTYAKMKNVYFIPSVSALKGWCERVGFENFEVLSVLKTTPKEQRKTDFILGQSLEDFLDKTDHSKTLEGYDAPLRGYFKMLKPSKR.

Carboxy-S-adenosyl-L-methionine-binding positions include Lys25, Trp39, Lys44, Gly63, 114–115 (VE), Tyr135, and Arg250.

It belongs to the class I-like SAM-binding methyltransferase superfamily. CmoB family. In terms of assembly, homotetramer.

The enzyme catalyses carboxy-S-adenosyl-L-methionine + 5-hydroxyuridine(34) in tRNA = 5-carboxymethoxyuridine(34) in tRNA + S-adenosyl-L-homocysteine + H(+). Functionally, catalyzes carboxymethyl transfer from carboxy-S-adenosyl-L-methionine (Cx-SAM) to 5-hydroxyuridine (ho5U) to form 5-carboxymethoxyuridine (cmo5U) at position 34 in tRNAs. The polypeptide is tRNA U34 carboxymethyltransferase (Helicobacter pylori (strain G27)).